The following is a 554-amino-acid chain: Calcium-dependent protein kinase 3 (554 aa).

The interval 30 to 55 is disordered; sequence KKKSSNKSIKSQHKFEGSKIANKNNE. A Protein kinase domain is found at 110 to 365; it reads NLSEEPLGKG…ASEALKHPWF (256 aa). Residues 116 to 124 and Lys139 contribute to the ATP site; that span reads LGKGTYGCV. Asp230 functions as the Proton acceptor in the catalytic mechanism. A J domain autoinhibitory motif motif is present at residues 385–393; that stretch reads NFKNYALLL. Positions 385-420 are j domain; sequence NFKNYALLLKLQKLAMTIIAQQSNDYDLQQLKTVFL. Positions 394-403 match the J domain EF-hand interaction motif motif; the sequence is KLQKLAMTII. EF-hand domains are found at residues 410–445, 448–479, 480–515, and 521–554; these read YDLQQLKTVFLYLDEDGKGNITKNQLKKGLENSGLK, QNFDVLLDQIDSDGSGRIDYTEFLAAALDRKH, LSKKLIYCAFRVFDVDNDGEITTAELAHILYNGNKK, and KDVNQVKKMIQEVDKNNDGKIDFYEFCEMMKLKY. Ca(2+) contacts are provided by Asp458, Asp460, Ser462, Arg464, Glu469, Asp493, Asp495, Asp497, Glu499, Glu504, Asp534, Asn536, Asp538, Lys540, and Glu545.

The protein belongs to the protein kinase superfamily. Ser/Thr protein kinase family. CDPK subfamily. Mg(2+) is required as a cofactor.

The protein resides in the cytoplasm. The catalysed reaction is L-seryl-[protein] + ATP = O-phospho-L-seryl-[protein] + ADP + H(+). The enzyme catalyses L-threonyl-[protein] + ATP = O-phospho-L-threonyl-[protein] + ADP + H(+). Activated by calcium. Upon calcium binding to the EF-hand domain 2, the C-terminus of the junction domain (J domain) undergoes a conformational change which results in the dissociation of the pseudo-substrate inhibitory motif from the catalytic domain. This, in turn, may facilitate the autophosphorylation of the activation loop at Thr-271, which leads to the kinase activation. Functionally, calcium-dependent protein kinase which acts as a sensor and effector of intracellular Ca(2+) levels probably in part downstream of cGMP-activated PKG kinase. In the mosquito midgut, regulates the gliding motility of the ookinete which is essential for the ookinete to invade the midgut epithelium. However, another study showed that while required for ookinete invasion of the midgut epithelium, is not required for ookinete gliding motility. This is Calcium-dependent protein kinase 3 from Plasmodium berghei (strain Anka).